We begin with the raw amino-acid sequence, 188 residues long: Elongation factor P-like protein (188 aa).

It belongs to the elongation factor P family.

In Stenotrophomonas maltophilia (strain K279a), this protein is Elongation factor P-like protein.